The chain runs to 194 residues: Large ribosomal subunit protein eL15 (194 aa).

The segment at 164-194 (SAGKKGRGLRNKGKGAEKVRPSVRANKGKTK) is disordered. Residues 167–176 (KKGRGLRNKG) show a composition bias toward basic residues.

It belongs to the eukaryotic ribosomal protein eL15 family.

The chain is Large ribosomal subunit protein eL15 from Thermococcus gammatolerans (strain DSM 15229 / JCM 11827 / EJ3).